Reading from the N-terminus, the 868-residue chain is Probable mixed-linked glucan synthase 3 (868 aa).

The interval 36–68 is disordered; the sequence is ERKAAGGGGGGAKGKHWAAADKGERRAAKECGG. Basic and acidic residues predominate over residues 53-68; that stretch reads AAADKGERRAAKECGG. A run of 2 helical transmembrane segments spans residues 86 to 106 and 116 to 136; these read LLHPYRALIFARLIAVLLFFG and IMWFWTMSVAGDVWFGFSWLL. The active site involves aspartate 211. 2 residues coordinate substrate: aspartate 412 and aspartate 414. Aspartate 573 is an active-site residue. 6 helical membrane-spanning segments follow: residues 649 to 669, 686 to 706, 717 to 737, 771 to 791, 810 to 830, and 838 to 858; these read IYPVTSLFILLYAISPVMWLI, LLVIILMIHMIGWLEIKWAGI, FFMIGSTSAYPTAVLHMVVNL, MLIPTMVVLVANIGAIGVAIG, MGLLFNMWVMFLLYPFALAIM, and IILVVLLPIIFVIVALVYVAT.

It belongs to the glycosyltransferase 2 family. Plant cellulose synthase-like F subfamily.

It localises to the golgi apparatus membrane. Its function is as follows. May catalyze both beta-1,3 and beta-1,4 glycosidic linkage on beta-D-glucan. Essential for (1,3;1,4)-beta-D-glucans synthesis in grasses and cereals (Poaceae). The mixed-linked glucans (which are not present in walls of dicotyledons or most other monocotyledonous plants) are particularly important constituents of the walls of the starchy endosperm and aleurone cells of cereal grains such as oats, wheat, rice and barley. They can account for up to 70% by weight of the wall. This is Probable mixed-linked glucan synthase 3 (CSLF3) from Oryza sativa subsp. japonica (Rice).